A 322-amino-acid polypeptide reads, in one-letter code: uncharacterized protein (322 aa).

The Radical SAM core domain occupies 34 to 286; it reads KFKQKIFKIP…QRLSKDKVPE (253 aa). [4Fe-4S] cluster is bound by residues C50, C58, and C61.

This sequence belongs to the radical SAM superfamily. [4Fe-4S] cluster serves as cofactor.

This is an uncharacterized protein from Methanocaldococcus jannaschii (strain ATCC 43067 / DSM 2661 / JAL-1 / JCM 10045 / NBRC 100440) (Methanococcus jannaschii).